Reading from the N-terminus, the 936-residue chain is Protein translocase subunit SecA (936 aa).

ATP-binding positions include Q90, 108 to 112 (GEGKT), and D499.

It belongs to the SecA family. As to quaternary structure, monomer and homodimer. Part of the essential Sec protein translocation apparatus which comprises SecA, SecYEG and auxiliary proteins SecDF. Other proteins may also be involved.

Its subcellular location is the cell inner membrane. It localises to the cellular thylakoid membrane. The protein resides in the cytoplasm. The enzyme catalyses ATP + H2O + cellular proteinSide 1 = ADP + phosphate + cellular proteinSide 2.. In terms of biological role, part of the Sec protein translocase complex. Interacts with the SecYEG preprotein conducting channel. Has a central role in coupling the hydrolysis of ATP to the transfer of proteins into and across the cell membrane, serving as an ATP-driven molecular motor driving the stepwise translocation of polypeptide chains across the membrane. Functionally, probably participates in protein translocation into and across both the cytoplasmic and thylakoid membranes in cyanobacterial cells. This is Protein translocase subunit SecA from Trichodesmium erythraeum (strain IMS101).